The sequence spans 85 residues: RNA-binding protein Hfq (85 aa).

The 60-residue stretch at 9–68 folds into the Sm domain; that stretch reads DPFLNALRRERVPVSIYLVNGIKLQGQVESFDQFVILLKNTVSQMVYKHAISTVVPARPF.

This sequence belongs to the Hfq family. Homohexamer.

In terms of biological role, RNA chaperone that binds small regulatory RNA (sRNAs) and mRNAs to facilitate mRNA translational regulation in response to envelope stress, environmental stress and changes in metabolite concentrations. Also binds with high specificity to tRNAs. The polypeptide is RNA-binding protein Hfq (Shewanella frigidimarina (strain NCIMB 400)).